The primary structure comprises 246 residues: 1-(5-phosphoribosyl)-5-[(5-phosphoribosylamino)methylideneamino] imidazole-4-carboxamide isomerase (246 aa).

Catalysis depends on D7, which acts as the Proton acceptor. D129 (proton donor) is an active-site residue.

The protein belongs to the HisA/HisF family.

The protein localises to the cytoplasm. The enzyme catalyses 1-(5-phospho-beta-D-ribosyl)-5-[(5-phospho-beta-D-ribosylamino)methylideneamino]imidazole-4-carboxamide = 5-[(5-phospho-1-deoxy-D-ribulos-1-ylimino)methylamino]-1-(5-phospho-beta-D-ribosyl)imidazole-4-carboxamide. It functions in the pathway amino-acid biosynthesis; L-histidine biosynthesis; L-histidine from 5-phospho-alpha-D-ribose 1-diphosphate: step 4/9. The protein is 1-(5-phosphoribosyl)-5-[(5-phosphoribosylamino)methylideneamino] imidazole-4-carboxamide isomerase of Buchnera aphidicola subsp. Acyrthosiphon pisum (strain Tuc7).